The sequence spans 407 residues: Subtilisin-like protease CPC735_013710 (407 aa).

The N-terminal stretch at 1 to 17 is a signal peptide; it reads MQLLNLSLFFLLPFATA. Positions 18–115 are excised as a propeptide; it reads NPIPQDSQNI…VLPDQKIYLA (98 aa). The region spanning 31–114 is the Inhibitor I9 domain; it reads QYIVTLKDGL…SVLPDQKIYL (84 aa). A Peptidase S8 domain is found at 124–407; it reads GWNLGYMSSK…VAYNGIQEML (284 aa). The N-linked (GlcNAc...) asparagine glycan is linked to N145. Residues D162 and H194 each act as charge relay system in the active site. Residues N241, N254, and N341 are each glycosylated (N-linked (GlcNAc...) asparagine). S350 acts as the Charge relay system in catalysis. The N-linked (GlcNAc...) asparagine glycan is linked to N381.

The protein belongs to the peptidase S8 family.

Its subcellular location is the secreted. In terms of biological role, secreted subtilisin-like serine protease with keratinolytic activity that contributes to pathogenicity. This Coccidioides posadasii (strain C735) (Valley fever fungus) protein is Subtilisin-like protease CPC735_013710.